An 85-amino-acid chain; its full sequence is Putative membrane protein insertion efficiency factor (85 aa).

It belongs to the UPF0161 family.

The protein localises to the cell inner membrane. In terms of biological role, could be involved in insertion of integral membrane proteins into the membrane. This chain is Putative membrane protein insertion efficiency factor, found in Fervidobacterium nodosum (strain ATCC 35602 / DSM 5306 / Rt17-B1).